The following is a 371-amino-acid chain: Cytochrome b (371 aa).

The next 8 membrane-spanning stretches (helical) occupy residues 25–45 (FGSMLLACSSMQVLTGFFLAV), 69–90 (WMMQNLHAIGASMFFICIYIHI), 105–125 (WLSGTTLLIMLMVTAFFGXXX), 170–190 (XXXXXXXXXXXXXXXXXXXXX), 218–238 (YKDLLMLSLMVLMLLMTVSFL), 280–300 (LGGALALAMSIMILLTVPFTH), 312–332 (IMQLMFWTLVATFMVITWAAT), and 339–358 (FTMISQIASTIYFLFFIMNP). Heme b-binding residues include His75 and His89. Heme b contacts are provided by Xaa174 and Xaa188.

It belongs to the cytochrome b family. As to quaternary structure, the cytochrome bc1 complex contains 3 respiratory subunits (MT-CYB, CYC1 and UQCRFS1), 2 core proteins (UQCRC1 and UQCRC2) and probably 6 low-molecular weight proteins. Requires heme b as cofactor.

It is found in the mitochondrion inner membrane. Component of the ubiquinol-cytochrome c reductase complex (complex III or cytochrome b-c1 complex) that is part of the mitochondrial respiratory chain. The b-c1 complex mediates electron transfer from ubiquinol to cytochrome c. Contributes to the generation of a proton gradient across the mitochondrial membrane that is then used for ATP synthesis. In Eryx tataricus (Tartar sand boa), this protein is Cytochrome b (MT-CYB).